Reading from the N-terminus, the 606-residue chain is Thrombospondin-related anonymous protein (606 aa).

A signal peptide spans 1–24 (MKLLGNSKYFFVVLLLCISVFLNG). The region spanning 43–228 (DLHILLDGSG…TMIKPFLSKV (186 aa)) is the VWFA domain. Residues 235–281 (VALCGKWEEWSECSTTCDNGTKIRKRKVLHPNCAGEMTAPCKVRDCP) form the TSP type-1 domain. The segment at 301 to 541 (PVEPIEPAEP…SKKQSKSNNG (241 aa)) is disordered. Composition is skewed to low complexity over residues 409 to 425 (ENPF…IIAP), 440 to 450 (ELPNNLPESPS), and 459 to 479 (PNDN…IPNK). 2 stretches are compositionally biased toward basic and acidic residues: residues 487-504 (NPYK…RSND) and 516-532 (DKLE…ENKS). Residues 544–564 (IAGGIIGGLAIIGCIGVGYNF) form a helical membrane-spanning segment.

As to quaternary structure, interacts (via integrin-like A-domain) with Anopheles gambiae saglin/SG1F; the interaction probably promotes sporozoite invasion of salivary gland. Interacts (via integrin-like A-domain) with human AHSG; the interaction promotes sporozoite invasion of hepatocytes and formation of exoerythrocytic forms of parasites in human hepatoma HepG2 cells.

Its subcellular location is the cell membrane. The protein localises to the cytoplasm. Functionally, promotes parasite ability to invade host hepatocytes. Promotes parasite ability to invade mosquito salivary glands. Required for sporozoite gliding motility. The sequence is that of Thrombospondin-related anonymous protein from Plasmodium berghei (strain Anka).